A 154-amino-acid polypeptide reads, in one-letter code: Methylglyoxal synthase (154 aa).

Positions 6 to 154 constitute an MGS-like domain; the sequence is QSLPAKKNIA…KYLATRQIDI (149 aa). Substrate contacts are provided by residues H19, K23, 45-48, and 65-66; these read TGTT and SG. D71 serves as the catalytic Proton donor/acceptor. Substrate is bound at residue H98.

This sequence belongs to the methylglyoxal synthase family.

The enzyme catalyses dihydroxyacetone phosphate = methylglyoxal + phosphate. Functionally, catalyzes the formation of methylglyoxal from dihydroxyacetone phosphate. The sequence is that of Methylglyoxal synthase from Pseudoalteromonas translucida (strain TAC 125).